The primary structure comprises 558 residues: Glucose-6-phosphate isomerase (558 aa).

N-acetylalanine is present on Ala-2. Position 12 is an N6-acetyllysine (Lys-12). Ser-86 and Ser-107 each carry phosphoserine. Residue Lys-142 is modified to N6-acetyllysine. Residue 159–160 coordinates D-glucose 6-phosphate; it reads GS. Ser-185 bears the Phosphoserine; by CK2 mark. Residue 210-215 coordinates D-glucose 6-phosphate; the sequence is SKTFTT. Position 250 is a phosphothreonine (Thr-250). Gln-354, Glu-358, and His-389 together coordinate D-glucose 6-phosphate. Glu-358 functions as the Proton donor in the catalytic mechanism. His-389 is an active-site residue. The residue at position 454 (Lys-454) is an N6-acetyllysine; alternate. Lys-454 is modified (N6-malonyllysine; alternate). Lys-454 carries the N6-succinyllysine; alternate modification. Ser-455 is modified (phosphoserine). Lys-519 contributes to the D-glucose 6-phosphate binding site. The active site involves Lys-519.

Belongs to the GPI family. Homodimer; in the catalytically active form. Monomer in the secreted form. In terms of processing, phosphorylation at Ser-185 by CK2 has been shown to decrease enzymatic activity and may contribute to secretion by a non-classical secretory pathway. ISGylated.

Its subcellular location is the cytoplasm. The protein localises to the secreted. It carries out the reaction alpha-D-glucose 6-phosphate = beta-D-fructose 6-phosphate. Its pathway is carbohydrate degradation; glycolysis; D-glyceraldehyde 3-phosphate and glycerone phosphate from D-glucose: step 2/4. Functionally, in the cytoplasm, catalyzes the conversion of glucose-6-phosphate to fructose-6-phosphate, the second step in glycolysis, and the reverse reaction during gluconeogenesis. Besides it's role as a glycolytic enzyme, also acts as a secreted cytokine: acts as an angiogenic factor (AMF) that stimulates endothelial cell motility. Acts as a neurotrophic factor, neuroleukin, for spinal and sensory neurons. It is secreted by lectin-stimulated T-cells and induces immunoglobulin secretion. The protein is Glucose-6-phosphate isomerase of Rattus norvegicus (Rat).